The following is a 107-amino-acid chain: Quaternary ammonium compound-resistance protein QacC (107 aa).

The Cytoplasmic portion of the chain corresponds to 1 to 2 (MP). The chain crosses the membrane as a helical span at residues 3-20 (YIYLIIAISTEVIGSAFL). The Extracellular portion of the chain corresponds to 21 to 29 (KSSEGFSKF). A helical membrane pass occupies residues 30-47 (IPSLGTIISFGICFYFLS). Over 48-56 (KTMQHLPLN) the chain is Cytoplasmic. Residues 57–75 (ITYATWAGLGLVLTTVVSI) form a helical membrane-spanning segment. Residues 76–85 (IIFKEQINLI) lie on the Extracellular side of the membrane. The helical transmembrane segment at 86-103 (TIVSIVLIIVGVVSLNIF) threads the bilayer. Over 104-107 (GTSH) the chain is Cytoplasmic.

This sequence belongs to the drug/metabolite transporter (DMT) superfamily. Small multidrug resistance (SMR) (TC 2.A.7.1) family.

It is found in the cell membrane. With respect to regulation, ethidium export is inhibited by N-ethylmaleimide (NEM). In terms of biological role, multidrug exporter. Is implicated for the resistance to bacteriocidal quaternary ammonium compounds and ethidium bromide. The chain is Quaternary ammonium compound-resistance protein QacC from Staphylococcus aureus.